We begin with the raw amino-acid sequence, 285 residues long: Eukaryotic translation initiation factor 3 subunit F-2 (285 aa).

The MPN domain maps to Val-11 to Gly-145.

It belongs to the eIF-3 subunit F family. Component of the eukaryotic translation initiation factor 3 (eIF-3) complex. The eIF-3 complex interacts with pix.

It is found in the cytoplasm. In terms of biological role, component of the eukaryotic translation initiation factor 3 (eIF-3) complex, which is involved in protein synthesis of a specialized repertoire of mRNAs and, together with other initiation factors, stimulates binding of mRNA and methionyl-tRNAi to the 40S ribosome. The eIF-3 complex specifically targets and initiates translation of a subset of mRNAs involved in cell proliferation. In Drosophila melanogaster (Fruit fly), this protein is Eukaryotic translation initiation factor 3 subunit F-2.